A 488-amino-acid chain; its full sequence is Ankyrin repeat domain-containing protein 13C (488 aa).

The disordered stretch occupies residues 1 to 60; that stretch reads MTGEKIRSVRKERKSGLDLLEPDEEPAATGPAKHRGSKIFSGGNHRISRSSSSPGDPDGA. Residues 41–59 show a composition bias toward low complexity; it reads SGGNHRISRSSSSPGDPDG. 3 ANK repeats span residues 58–87, 90–119, and 123–152; these read DGAY…IAQK, HGNT…PVKV, and QGWS…QQSR.

It localises to the endoplasmic reticulum membrane. Its function is as follows. Acts as a molecular chaperone for G protein-coupled receptors, regulating their biogenesis and exit from the ER. The chain is Ankyrin repeat domain-containing protein 13C (ankrd13c) from Danio rerio (Zebrafish).